Here is a 772-residue protein sequence, read N- to C-terminus: Probable adenosine deaminase (772 aa).

Zn(2+) contacts are provided by H22 and H24. H24, D26, and G180 together coordinate substrate. H207 lines the Zn(2+) pocket. E210 serves as the catalytic Proton donor. D288 contributes to the Zn(2+) binding site.

It belongs to the metallo-dependent hydrolases superfamily. Adenosine and AMP deaminases family. Zn(2+) serves as cofactor.

It carries out the reaction adenosine + H2O + H(+) = inosine + NH4(+). In terms of biological role, catalyzes the hydrolytic deamination of adenosine. Plays an important role in purine metabolism and in adenosine homeostasis, and may thereby contribute to cellular signaling events. The chain is Probable adenosine deaminase (ada) from Dictyostelium discoideum (Social amoeba).